We begin with the raw amino-acid sequence, 425 residues long: Serine--tRNA ligase (425 aa).

Residue 230–232 participates in L-serine binding; sequence TAE. 261-263 is an ATP binding site; that stretch reads RSE. Glu284 lines the L-serine pocket. 348–351 serves as a coordination point for ATP; the sequence is EISS. Ser384 contacts L-serine.

Belongs to the class-II aminoacyl-tRNA synthetase family. Type-1 seryl-tRNA synthetase subfamily. Homodimer. The tRNA molecule binds across the dimer.

The protein localises to the cytoplasm. It carries out the reaction tRNA(Ser) + L-serine + ATP = L-seryl-tRNA(Ser) + AMP + diphosphate + H(+). The enzyme catalyses tRNA(Sec) + L-serine + ATP = L-seryl-tRNA(Sec) + AMP + diphosphate + H(+). It participates in aminoacyl-tRNA biosynthesis; selenocysteinyl-tRNA(Sec) biosynthesis; L-seryl-tRNA(Sec) from L-serine and tRNA(Sec): step 1/1. Functionally, catalyzes the attachment of serine to tRNA(Ser). Is also able to aminoacylate tRNA(Sec) with serine, to form the misacylated tRNA L-seryl-tRNA(Sec), which will be further converted into selenocysteinyl-tRNA(Sec). The chain is Serine--tRNA ligase from Streptococcus pyogenes serotype M6 (strain ATCC BAA-946 / MGAS10394).